The chain runs to 186 residues: Probable RNA 2'-phosphotransferase (186 aa).

It belongs to the KptA/TPT1 family.

Removes the 2'-phosphate from RNA via an intermediate in which the phosphate is ADP-ribosylated by NAD followed by a presumed transesterification to release the RNA and generate ADP-ribose 1''-2''-cyclic phosphate (APPR&gt;P). May function as an ADP-ribosylase. This chain is Probable RNA 2'-phosphotransferase, found in Clostridium perfringens (strain SM101 / Type A).